Reading from the N-terminus, the 189-residue chain is ATP synthase subunit b (189 aa).

The helical transmembrane segment at L7–G27 threads the bilayer.

This sequence belongs to the ATPase B chain family. In terms of assembly, F-type ATPases have 2 components, F(1) - the catalytic core - and F(0) - the membrane proton channel. F(1) has five subunits: alpha(3), beta(3), gamma(1), delta(1), epsilon(1). F(0) has three main subunits: a(1), b(2) and c(10-14). The alpha and beta chains form an alternating ring which encloses part of the gamma chain. F(1) is attached to F(0) by a central stalk formed by the gamma and epsilon chains, while a peripheral stalk is formed by the delta and b chains.

The protein resides in the cell inner membrane. F(1)F(0) ATP synthase produces ATP from ADP in the presence of a proton or sodium gradient. F-type ATPases consist of two structural domains, F(1) containing the extramembraneous catalytic core and F(0) containing the membrane proton channel, linked together by a central stalk and a peripheral stalk. During catalysis, ATP synthesis in the catalytic domain of F(1) is coupled via a rotary mechanism of the central stalk subunits to proton translocation. Its function is as follows. Component of the F(0) channel, it forms part of the peripheral stalk, linking F(1) to F(0). This is ATP synthase subunit b from Hyphomonas neptunium (strain ATCC 15444).